We begin with the raw amino-acid sequence, 298 residues long: Hydroxymethylglutaryl-CoA lyase, mitochondrial (298 aa).

One can recognise a Pyruvate carboxyltransferase domain in the interval 6–273; that stretch reads VKVVEVGPRD…HTGVDLQKLM (268 aa). Position 14 (Arg14) interacts with substrate. Position 15 (Asp15) interacts with a divalent metal cation. Lys21 is subject to N6-acetyllysine. Positions 206 and 208 each coordinate a divalent metal cation. Cys239 is a catalytic residue. Residue Asn248 participates in a divalent metal cation binding. The Microbody targeting signal signature appears at 296–298; it reads CRL.

Belongs to the HMG-CoA lyase family. In terms of assembly, homodimer; disulfide-linked. Can also form homotetramers.

The protein resides in the mitochondrion matrix. It is found in the peroxisome. It catalyses the reaction (3S)-3-hydroxy-3-methylglutaryl-CoA = acetoacetate + acetyl-CoA. It functions in the pathway metabolic intermediate metabolism; (S)-3-hydroxy-3-methylglutaryl-CoA degradation; acetoacetate from (S)-3-hydroxy-3-methylglutaryl-CoA: step 1/1. Its function is as follows. Mitochondrial 3-hydroxy-3-methylglutaryl-CoA lyase that catalyzes a cation-dependent cleavage of (S)-3-hydroxy-3-methylglutaryl-CoA into acetyl-CoA and acetoacetate, a key step in ketogenesis. Terminal step in leucine catabolism. Ketone bodies (beta-hydroxybutyrate, acetoacetate and acetone) are essential as an alternative source of energy to glucose, as lipid precursors and as regulators of metabolism. The sequence is that of Hydroxymethylglutaryl-CoA lyase, mitochondrial (HMGCL) from Gallus gallus (Chicken).